A 784-amino-acid polypeptide reads, in one-letter code: Probable leucine-rich repeat receptor-like protein kinase IMK3 (784 aa).

A signal peptide spans 1–48; it reads MEFITQNQAITSLSMINTDIDQPKASLRSRFLLHLIICLLFFVPPCSS. Over 49-409 the chain is Extracellular; that stretch reads QAWDGVVITQ…PSHRNLSTKD (361 aa). N-linked (GlcNAc...) asparagine glycosylation occurs at Asn-82. 10 LRR repeats span residues 126–148, 150–172, 174–197, 198–220, 222–242, 247–268, 271–294, 295–317, 319–342, and 343–365; these read ALRK…LGLI, NLRG…LGVS, FLQT…ADSS, KLLR…LSRS, SLQF…DTWG, NLRV…SLCN, QLQD…SKLT, KLRK…LGNI, SLIH…SDLE, and SLNF…LSQK. 3 N-linked (GlcNAc...) asparagine glycosylation sites follow: Asn-203, Asn-232, and Asn-268. N-linked (GlcNAc...) asparagine glycosylation is present at Asn-316. Asn-348, Asn-353, Asn-367, and Asn-404 each carry an N-linked (GlcNAc...) asparagine glycan. A helical membrane pass occupies residues 410–430; the sequence is IILIASGALLIVMLILVCVLC. At 431 to 784 the chain is on the cytoplasmic side; that stretch reads CLLRKKANET…VPEASASTSQ (354 aa). The segment at 441–467 is disordered; sequence KAKGGEAGPGAVAAKTEKGGEAEAGGE. A Protein kinase domain is found at 488–773; sequence CATAEIMGKS…TTATTSEPLI (286 aa). Residues 494 to 502 and Lys-516 each bind ATP; that span reads MGKSTYGTV. Residues 760–784 are disordered; that stretch reads RPEETTATTSEPLIDVPEASASTSQ.

It belongs to the protein kinase superfamily. Ser/Thr protein kinase family. In terms of assembly, interacts with AGL24. Post-translationally, autophosphorylated. Expressed in meristems, including roots, vegetative, inflorescence and floral meristems, and in embryos.

The protein resides in the cell membrane. It catalyses the reaction L-seryl-[protein] + ATP = O-phospho-L-seryl-[protein] + ADP + H(+). It carries out the reaction L-threonyl-[protein] + ATP = O-phospho-L-threonyl-[protein] + ADP + H(+). In terms of biological role, can phosphorylate AGL24. This chain is Probable leucine-rich repeat receptor-like protein kinase IMK3 (IMK3), found in Arabidopsis thaliana (Mouse-ear cress).